The sequence spans 184 residues: MIVGLVGEVLKKEPTYLHIEVGGVVYEVFISLNASAAIDKKQIRLHTTHIIREDSESLYGFVDINEKKMFDRLIKLNGVGPKVAIAICSTFKPQEFVQIVQQKNVAMLKKVPGIGPKSAQRILVELGEFDISESNVTSSAFQEASMALQSLGFKKEQIQKALQECTATDTASLVKEALKKIQKL.

A domain I region spans residues 1-62 (MIVGLVGEVL…EDSESLYGFV (62 aa)). Residues 63-134 (DINEKKMFDR…ELGEFDISES (72 aa)) form a domain II region. A flexible linker region spans residues 134 to 135 (SN). The tract at residues 136-184 (VTSSAFQEASMALQSLGFKKEQIQKALQECTATDTASLVKEALKKIQKL) is domain III.

The protein belongs to the RuvA family. As to quaternary structure, homotetramer. Forms an RuvA(8)-RuvB(12)-Holliday junction (HJ) complex. HJ DNA is sandwiched between 2 RuvA tetramers; dsDNA enters through RuvA and exits via RuvB. An RuvB hexamer assembles on each DNA strand where it exits the tetramer. Each RuvB hexamer is contacted by two RuvA subunits (via domain III) on 2 adjacent RuvB subunits; this complex drives branch migration. In the full resolvosome a probable DNA-RuvA(4)-RuvB(12)-RuvC(2) complex forms which resolves the HJ.

It localises to the cytoplasm. Its function is as follows. The RuvA-RuvB-RuvC complex processes Holliday junction (HJ) DNA during genetic recombination and DNA repair, while the RuvA-RuvB complex plays an important role in the rescue of blocked DNA replication forks via replication fork reversal (RFR). RuvA specifically binds to HJ cruciform DNA, conferring on it an open structure. The RuvB hexamer acts as an ATP-dependent pump, pulling dsDNA into and through the RuvAB complex. HJ branch migration allows RuvC to scan DNA until it finds its consensus sequence, where it cleaves and resolves the cruciform DNA. This Nitratiruptor sp. (strain SB155-2) protein is Holliday junction branch migration complex subunit RuvA.